We begin with the raw amino-acid sequence, 257 residues long: NAD kinase (257 aa).

Asp-46 functions as the Proton acceptor in the catalytic mechanism. Residues Asp-46–Gly-47, His-51, Asn-116–Glu-117, Asp-146, Ala-154, Thr-157–Ser-162, and Gln-218 contribute to the NAD(+) site.

This sequence belongs to the NAD kinase family. It depends on a divalent metal cation as a cofactor.

The protein localises to the cytoplasm. It catalyses the reaction NAD(+) + ATP = ADP + NADP(+) + H(+). Involved in the regulation of the intracellular balance of NAD and NADP, and is a key enzyme in the biosynthesis of NADP. Catalyzes specifically the phosphorylation on 2'-hydroxyl of the adenosine moiety of NAD to yield NADP. The polypeptide is NAD kinase (Rhizobium meliloti (strain 1021) (Ensifer meliloti)).